A 744-amino-acid chain; its full sequence is Zinc finger protein 483 (744 aa).

Residues 52 to 134 (RQRFRWFCYS…TLIEDLTQML (83 aa)) enclose the SCAN box domain. The disordered stretch occupies residues 137–156 (KDPVSQDSTVSQEENSKEDK). The region spanning 170-241 (ITLKDVAVNF…EEVSKSSRLD (72 aa)) is the KRAB domain. Disordered stretches follow at residues 263 to 308 (ESQQ…SPFG) and 350 to 385 (KEKTAGEKSRKSNDGGKVLSHSSALTEHQKRQKIHL). A compositionally biased stretch (polar residues) spans 277 to 293 (NQGNSKGRVAQNKTLGS). 2 stretches are compositionally biased toward basic and acidic residues: residues 298 to 308 (KKFDPDKSPFG) and 350 to 363 (KEKTAGEKSRKSND). C2H2-type zinc fingers lie at residues 439–461 (HKCSKCGKAFGYSASLTKHRRIH), 467–489 (YMCNECGKAFSDSSSLTPHHRTH), 495–517 (FKCDDCGKGFTLSAHLIKHQRIH), 523–545 (YKCKDCGRPFSDSSSLIQHQRIH), 551–573 (YTCSNCGKSFSHSSSLSKHQRIH), 579–601 (YKCGECGKAFRQNSCLTRHQRIH), 607–629 (YLCNDCGMTFSHFTSVIYHQRLH), 635–657 (YKCNQCEKAFPTHSLLSRHQRIH), 663–685 (YKCKECGKSFSQSSSLNEHHRIH), 691–713 (YECNYCGATFSRSSILVEHLKIH), and 719–741 (YECNECEKTFKSNSGLIRHRGFH).

It belongs to the krueppel C2H2-type zinc-finger protein family.

It localises to the nucleus. May be involved in transcriptional regulation. In Homo sapiens (Human), this protein is Zinc finger protein 483 (ZNF483).